The sequence spans 411 residues: Anaerobic sulfatase-maturating enzyme homolog AslB (411 aa).

The Radical SAM core domain maps to glutamine 3 to lysine 250. [4Fe-4S] cluster-binding residues include cysteine 21 and cysteine 25. An S-adenosyl-L-methionine-binding site is contributed by tyrosine 27. Cysteine 28 contributes to the [4Fe-4S] cluster binding site. S-adenosyl-L-methionine is bound by residues glycine 74, serine 129, and arginine 141. 3 residues coordinate [4Fe-4S] cluster: cysteine 276, cysteine 282, and cysteine 297. Aspartate 298 acts as the Proton acceptor in catalysis. The [4Fe-4S] cluster site is built by cysteine 339, cysteine 342, cysteine 348, cysteine 352, and cysteine 371.

Belongs to the radical SAM superfamily. Anaerobic sulfatase-maturating enzyme family. [4Fe-4S] cluster is required as a cofactor.

This is Anaerobic sulfatase-maturating enzyme homolog AslB (aslB) from Escherichia coli (strain K12).